The chain runs to 116 residues: Dynein light chain Tctex-type 3 (116 aa).

Position 4 is a 3'-nitrotyrosine (tyrosine 4).

Belongs to the dynein light chain Tctex-type family. In terms of assembly, homodimer. The cytoplasmic dynein 1 complex consists of two catalytic heavy chains (HCs) and a number of non-catalytic subunits presented by intermediate chains (ICs), light intermediate chains (LICs) and light chains (LCs); the composition seems to vary in respect to the IC, LIC and LC composition. The heavy chain homodimer serves as a scaffold for the probable homodimeric assembly of the respective non-catalytic subunits. The ICs and LICs bind directly to the HC dimer and the LCs assemble on the IC dimer. DYNLT1 and DYNLT3 compete for association with dynein IC (DYNC1I1 or DYNC1I2). Self-associates. Interacts with DYNC1I1 and DYNC1I2. Interacts with BUB3. Interacts with SATB1 in nucleus to form complex with matrix attachment regions (MARs) of DNA.

Its subcellular location is the nucleus. It localises to the cytoplasm. The protein localises to the cytoskeleton. It is found in the chromosome. The protein resides in the centromere. Its subcellular location is the kinetochore. Functionally, acts as one of several non-catalytic accessory components of the cytoplasmic dynein 1 complex that are thought to be involved in linking dynein to cargos and to adapter proteins that regulate dynein function. Cytoplasmic dynein 1 acts as a motor for the intracellular retrograde motility of vesicles and organelles along microtubules. Probably binds BUB3 as part of transport cargo. Required for the efficient progression through mitosis. In Homo sapiens (Human), this protein is Dynein light chain Tctex-type 3 (DYNLT3).